The following is a 574-amino-acid chain: Phosphate permease PHO89 (574 aa).

Residues 1-5 (MALHQ) are Extracellular-facing. The chain crosses the membrane as a helical span at residues 6–26 (FDYIFAIAMLFAFLDAFNIGA). At 27–43 (NDVANSFASSISSRSLK) the chain is on the cytoplasmic side. The helical transmembrane segment at 44–64 (YWQAMVLAGLCEFLGAVLAGA) threads the bilayer. Over 65–84 (RVSGTIKNNIIDSSIFTNDP) the chain is Extracellular. Residues 85–105 (AVLMLTMTSALIGSSCWLTFA) traverse the membrane as a helical segment. Over 106–117 (TAIGMPVSTTHS) the chain is Cytoplasmic. A helical transmembrane segment spans residues 118-138 (IVGGTIGAGIAAGGANGVVWG). Residues 139 to 145 (WSGVSQI) lie on the Extracellular side of the membrane. The chain crosses the membrane as a helical span at residues 146–166 (IASWFIAPILAGAIAAIVFSI). Topologically, residues 167-184 (SRFSVLEVKSLERSIKNA) are cytoplasmic. Residues 185–205 (LLLVGVLVFATFSILTMLIVW) form a helical membrane-spanning segment. Residues 206 to 222 (KGSPNLHLDDLSETETA) are Extracellular-facing. A helical membrane pass occupies residues 223-243 (VSIVLTGAIASIVYFIFFYPF). The Cytoplasmic segment spans residues 244–354 (YRRKVLDQDW…SLLKQGPKKW (111 aa)). The segment at 301–332 (EDEENKAASNSNDSVKNKEDIQEVDLVRTETE) is disordered. Basic and acidic residues predominate over residues 315–332 (VKNKEDIQEVDLVRTETE). The helical transmembrane segment at 355–375 (PLLFWLVISHGWTQDVIHAQV) threads the bilayer. Over 376–398 (NDRDMLSGDLKGMYERSKFYDNR) the chain is Extracellular. A helical membrane pass occupies residues 399–419 (VEYIYSVLQAITAATMSFAHG). At 420-447 (ANDVANATGPLSAVYVIWKTNTIGAKSE) the chain is on the cytoplasmic side. A helical membrane pass occupies residues 448-468 (VPVWVLAYGGVALVIGCWTYG). Over 469 to 503 (YNIIKNLGNKMILQSPSRGFSIELAVAITTVMATQ) the chain is Extracellular. A helical transmembrane segment spans residues 504–524 (LGIPTSTTQIAVGGIVAVGLC). Residues 525-541 (NKDLKSVNWRMVAWCYS) are Cytoplasmic-facing. A helical transmembrane segment spans residues 542-562 (GWFLTLPIAGLIAGIINGIIL). Topologically, residues 563–574 (NAPRFGVEYQMT) are extracellular.

It belongs to the inorganic phosphate transporter (PiT) (TC 2.A.20) family. As to quaternary structure, forms homodimers and higher order homooligomers.

The protein localises to the cell membrane. It carries out the reaction 2 Na(+)(out) + phosphate(out) = 2 Na(+)(in) + phosphate(in). Its activity is regulated as follows. Weakly stimulated by Li(+) and K(+). Inhibited by monensin. Inhibited by phosphonoacetic acid. Inhibited by methylphosphonate. Inhibited by dimethylphosphonate. Its function is as follows. Sodium-phosphate symporter. Active in early growth phase. The chain is Phosphate permease PHO89 (PHO89) from Saccharomyces cerevisiae (strain ATCC 204508 / S288c) (Baker's yeast).